The following is a 619-amino-acid chain: 1-deoxy-D-xylulose-5-phosphate synthase (619 aa).

Thiamine diphosphate-binding positions include His-80 and 121 to 123; that span reads GHS. Asp-152 serves as a coordination point for Mg(2+). Thiamine diphosphate contacts are provided by residues 153–154, Asn-181, Tyr-288, and Glu-370; that span reads GA. Asn-181 contacts Mg(2+).

It belongs to the transketolase family. DXPS subfamily. Homodimer. The cofactor is Mg(2+). Thiamine diphosphate is required as a cofactor.

It carries out the reaction D-glyceraldehyde 3-phosphate + pyruvate + H(+) = 1-deoxy-D-xylulose 5-phosphate + CO2. The protein operates within metabolic intermediate biosynthesis; 1-deoxy-D-xylulose 5-phosphate biosynthesis; 1-deoxy-D-xylulose 5-phosphate from D-glyceraldehyde 3-phosphate and pyruvate: step 1/1. Functionally, catalyzes the acyloin condensation reaction between C atoms 2 and 3 of pyruvate and glyceraldehyde 3-phosphate to yield 1-deoxy-D-xylulose-5-phosphate (DXP). The sequence is that of 1-deoxy-D-xylulose-5-phosphate synthase from Yersinia pseudotuberculosis serotype O:3 (strain YPIII).